Here is a 729-residue protein sequence, read N- to C-terminus: 1,4-alpha-glucan branching enzyme GlgB 2 (729 aa).

Aspartate 408 serves as the catalytic Nucleophile. Catalysis depends on glutamate 461, which acts as the Proton donor.

This sequence belongs to the glycosyl hydrolase 13 family. GlgB subfamily. Monomer.

It catalyses the reaction Transfers a segment of a (1-&gt;4)-alpha-D-glucan chain to a primary hydroxy group in a similar glucan chain.. Its pathway is glycan biosynthesis; glycogen biosynthesis. Catalyzes the formation of the alpha-1,6-glucosidic linkages in glycogen by scission of a 1,4-alpha-linked oligosaccharide from growing alpha-1,4-glucan chains and the subsequent attachment of the oligosaccharide to the alpha-1,6 position. The sequence is that of 1,4-alpha-glucan branching enzyme GlgB 2 from Xanthomonas campestris pv. campestris (strain 8004).